The following is a 154-amino-acid chain: Xanthine-guanine phosphoribosyltransferase (154 aa).

5-phospho-alpha-D-ribose 1-diphosphate is bound by residues 37–38, arginine 69, and 88–96; these read RG and EDLVDSGDT. Arginine 69 contacts GMP. Position 89 (aspartate 89) interacts with Mg(2+). Residues aspartate 92 and isoleucine 135 each coordinate guanine. Xanthine-binding residues include aspartate 92 and isoleucine 135. Residues 92–96 and 134–135 each bind GMP; these read DSGDT and WI.

It belongs to the purine/pyrimidine phosphoribosyltransferase family. XGPT subfamily. In terms of assembly, homotetramer. Mg(2+) serves as cofactor.

The protein localises to the cell inner membrane. The catalysed reaction is GMP + diphosphate = guanine + 5-phospho-alpha-D-ribose 1-diphosphate. The enzyme catalyses XMP + diphosphate = xanthine + 5-phospho-alpha-D-ribose 1-diphosphate. It carries out the reaction IMP + diphosphate = hypoxanthine + 5-phospho-alpha-D-ribose 1-diphosphate. It participates in purine metabolism; GMP biosynthesis via salvage pathway; GMP from guanine: step 1/1. It functions in the pathway purine metabolism; XMP biosynthesis via salvage pathway; XMP from xanthine: step 1/1. Its function is as follows. Purine salvage pathway enzyme that catalyzes the transfer of the ribosyl-5-phosphate group from 5-phospho-alpha-D-ribose 1-diphosphate (PRPP) to the N9 position of the 6-oxopurines guanine and xanthine to form the corresponding ribonucleotides GMP (guanosine 5'-monophosphate) and XMP (xanthosine 5'-monophosphate), with the release of PPi. To a lesser extent, also acts on hypoxanthine. The chain is Xanthine-guanine phosphoribosyltransferase from Vibrio campbellii (strain ATCC BAA-1116).